The following is a 335-amino-acid chain: LIM and SH3 domain protein F42H10.3 (335 aa).

An LIM zinc-binding domain is found at 5–65 (CAREDCGKTV…DPHYPKTVAS (61 aa)). 2 Nebulin repeats span residues 66 to 97 (VMAD…KMKG) and 98 to 132 (TKIE…QKAR). Basic and acidic residues predominate over residues 128–142 (DQKARQEEVRPKEEI). Disordered stretches follow at residues 128 to 151 (DQKA…PTPI) and 233 to 264 (DFAG…ISPT). Low complexity predominate over residues 242–260 (SNSISSTSPHSTLSSPQST). In terms of domain architecture, SH3 spans 266–327 (KAGFAVKAIY…PANYVQPHKL (62 aa)).

The sequence is that of LIM and SH3 domain protein F42H10.3 from Caenorhabditis elegans.